A 494-amino-acid polypeptide reads, in one-letter code: Lysine--tRNA ligase (494 aa).

Mg(2+)-binding residues include Glu-399 and Glu-406.

This sequence belongs to the class-II aminoacyl-tRNA synthetase family. Requires Mg(2+) as cofactor.

Its subcellular location is the cytoplasm. The catalysed reaction is tRNA(Lys) + L-lysine + ATP = L-lysyl-tRNA(Lys) + AMP + diphosphate. This Saccharolobus solfataricus (strain ATCC 35092 / DSM 1617 / JCM 11322 / P2) (Sulfolobus solfataricus) protein is Lysine--tRNA ligase (lysS).